The chain runs to 834 residues: Meiotic sister-chromatid recombination protein 3 (834 aa).

4 disordered regions span residues 75–136 (PAAA…QPRT), 251–291 (EETE…TGSL), 343–378 (RKLAQPQQGQNQRRTVSFTQGSIDHMNTTKKKKQPL), and 458–479 (VRRSKSMTGSAVPPQAGKKKLT). Residues 343–368 (RKLAQPQQGQNQRRTVSFTQGSIDHM) are compositionally biased toward polar residues.

Its subcellular location is the cell membrane. In terms of biological role, may be involved in the control of meiotic sister-chromatid recombination. The polypeptide is Meiotic sister-chromatid recombination protein 3 (MSC3) (Candida glabrata (strain ATCC 2001 / BCRC 20586 / JCM 3761 / NBRC 0622 / NRRL Y-65 / CBS 138) (Yeast)).